Reading from the N-terminus, the 59-residue chain is Ferredoxin (59 aa).

4Fe-4S ferredoxin-type domains follow at residues 2 to 30 and 31 to 59; these read GKIT…LEVN and DHVE…LKVE. [4Fe-4S] cluster-binding residues include Cys-12, Cys-15, Cys-18, Cys-22, Cys-41, Cys-44, Cys-47, and Cys-51.

Requires [4Fe-4S] cluster as cofactor.

In terms of biological role, ferredoxins are iron-sulfur proteins that transfer electrons in a wide variety of metabolic reactions. The sequence is that of Ferredoxin from Entamoeba histolytica (strain ATCC 30459 / HM-1:IMSS / ABRM).